Here is a 145-residue protein sequence, read N- to C-terminus: Cytochrome c-type biogenesis protein CcmE (145 aa).

Over 1-7 the chain is Cytoplasmic; the sequence is MKAKHQR. The helical; Signal-anchor for type II membrane protein transmembrane segment at 8-28 threads the bilayer; that stretch reads LILAVAALCGVAGAGVLAASA. Residues 29 to 145 are Periplasmic-facing; it reads LRDEAAYFRT…PKNMKAAVEG (117 aa). Positions 123 and 127 each coordinate heme.

This sequence belongs to the CcmE/CycJ family.

It localises to the cell inner membrane. Functionally, heme chaperone required for the biogenesis of c-type cytochromes. Transiently binds heme delivered by CcmC and transfers the heme to apo-cytochromes in a process facilitated by CcmF and CcmH. The protein is Cytochrome c-type biogenesis protein CcmE of Sphingopyxis alaskensis (strain DSM 13593 / LMG 18877 / RB2256) (Sphingomonas alaskensis).